Reading from the N-terminus, the 300-residue chain is m7GpppN-mRNA hydrolase NUDT17 (300 aa).

A Nudix hydrolase domain is found at 88–239 (SRGVDVGVAV…KECVQIPADL (152 aa)). The Nudix box motif lies at 127–148 (GHVELDEKLLDAGLRELLEETG). E142 and E146 together coordinate Mg(2+).

The protein belongs to the Nudix hydrolase family. Mg(2+) is required as a cofactor. The cofactor is Mn(2+).

It catalyses the reaction a 5'-end (N(7)-methyl 5'-triphosphoguanosine)-ribonucleoside in mRNA + H2O = N(7)-methyl-GDP + a 5'-end phospho-ribonucleoside in mRNA + 2 H(+). Functionally, acts as a decapping enzyme capable of hydrolyzing monomethylated capped RNAs (in vitro). Hydrolyzes monomethylated capped RNA after alpha and beta phosphates to form N(7)-methyl-GDP. Shows low activity towards unmethylated capped RNA. This is m7GpppN-mRNA hydrolase NUDT17 (nudt17) from Danio rerio (Zebrafish).